Reading from the N-terminus, the 268-residue chain is DNA repair protein RecO (268 aa).

Belongs to the RecO family.

Its function is as follows. Involved in DNA repair and RecF pathway recombination. The protein is DNA repair protein RecO of Mycobacterium leprae (strain Br4923).